Reading from the N-terminus, the 146-residue chain is Hemoglobin subunit beta (146 aa).

Residues 2–146 enclose the Globin domain; sequence FLTAEEKSLV…VANALAHKYH (145 aa). Residue Ser44 is modified to Phosphoserine. An N6-acetyllysine modification is found at Lys59. His63 provides a ligand contact to heme b. Lys82 carries the N6-acetyllysine modification. Position 92 (His92) interacts with heme b. The residue at position 93 (Cys93) is an S-nitrosocysteine. Lys144 is modified (N6-acetyllysine).

It belongs to the globin family. In terms of assembly, heterotetramer of two alpha chains and two beta chains. Red blood cells.

Functionally, involved in oxygen transport from the lung to the various peripheral tissues. The chain is Hemoglobin subunit beta (HBB) from Proteles cristata (Aardwolf).